The primary structure comprises 291 residues: Formamidopyrimidine-DNA glycosylase (291 aa).

Pro2 (schiff-base intermediate with DNA) is an active-site residue. Glu3 functions as the Proton donor in the catalytic mechanism. Residue Lys58 is the Proton donor; for beta-elimination activity of the active site. DNA contacts are provided by His104, Arg127, and Arg172. The FPG-type zinc finger occupies 257–291; the sequence is FVYDRAGLPCRACGTPIRQIVQGQRSTFCCPTCQR. The active-site Proton donor; for delta-elimination activity is Arg281.

Belongs to the FPG family. In terms of assembly, monomer. It depends on Zn(2+) as a cofactor.

It catalyses the reaction Hydrolysis of DNA containing ring-opened 7-methylguanine residues, releasing 2,6-diamino-4-hydroxy-5-(N-methyl)formamidopyrimidine.. The enzyme catalyses 2'-deoxyribonucleotide-(2'-deoxyribose 5'-phosphate)-2'-deoxyribonucleotide-DNA = a 3'-end 2'-deoxyribonucleotide-(2,3-dehydro-2,3-deoxyribose 5'-phosphate)-DNA + a 5'-end 5'-phospho-2'-deoxyribonucleoside-DNA + H(+). Functionally, involved in base excision repair of DNA damaged by oxidation or by mutagenic agents. Acts as a DNA glycosylase that recognizes and removes damaged bases. Has a preference for oxidized purines, such as 7,8-dihydro-8-oxoguanine (8-oxoG). Has AP (apurinic/apyrimidinic) lyase activity and introduces nicks in the DNA strand. Cleaves the DNA backbone by beta-delta elimination to generate a single-strand break at the site of the removed base with both 3'- and 5'-phosphates. The polypeptide is Formamidopyrimidine-DNA glycosylase (Ralstonia pickettii (strain 12J)).